We begin with the raw amino-acid sequence, 475 residues long: Membrane-bound lytic murein transglycosylase F (475 aa).

A signal peptide spans Met1 to Ala15. A non-LT domain region spans residues Ala16–Val258. Residues Lys259–Pro475 form an LT domain region. The active site involves Glu303.

This sequence in the N-terminal section; belongs to the bacterial solute-binding protein 3 family. The protein in the C-terminal section; belongs to the transglycosylase Slt family.

The protein localises to the cell outer membrane. The enzyme catalyses Exolytic cleavage of the (1-&gt;4)-beta-glycosidic linkage between N-acetylmuramic acid (MurNAc) and N-acetylglucosamine (GlcNAc) residues in peptidoglycan, from either the reducing or the non-reducing ends of the peptidoglycan chains, with concomitant formation of a 1,6-anhydrobond in the MurNAc residue.. In terms of biological role, murein-degrading enzyme that degrades murein glycan strands and insoluble, high-molecular weight murein sacculi, with the concomitant formation of a 1,6-anhydromuramoyl product. Lytic transglycosylases (LTs) play an integral role in the metabolism of the peptidoglycan (PG) sacculus. Their lytic action creates space within the PG sacculus to allow for its expansion as well as for the insertion of various structures such as secretion systems and flagella. The protein is Membrane-bound lytic murein transglycosylase F of Shewanella halifaxensis (strain HAW-EB4).